We begin with the raw amino-acid sequence, 129 residues long: Cocaine- and amphetamine-regulated transcript protein (129 aa).

Residues 1–27 (MESSRLRLLPLLGAALLLLLPLLGARA) form the signal peptide. Tyr-41 carries the phosphotyrosine modification. The residue at position 48 (Ser-48) is a Phosphoserine. 3 disulfides stabilise this stretch: Cys-95–Cys-113, Cys-101–Cys-121, and Cys-115–Cys-128.

This sequence belongs to the CART family.

Its subcellular location is the secreted. Functionally, satiety factor closely associated with the actions of leptin and neuropeptide y; this anorectic peptide inhibits both normal and starvation-induced feeding and completely blocks the feeding response induced by neuropeptide Y and regulated by leptin in the hypothalamus. The protein is Cocaine- and amphetamine-regulated transcript protein (Cartpt) of Mus musculus (Mouse).